Consider the following 204-residue polypeptide: Facilitator of iron transport 3 (204 aa).

A signal peptide spans 1–18 (MKFSSALVLSAVAATALA). Disordered regions lie at residues 84–104 (SAAE…SGSS) and 133–175 (EGSS…SSTA). The segment covering 135–175 (SSNTWSPSSTSTSSEAATSSASTTATTTAETSSSATSSSTA) has biased composition (low complexity). A lipid anchor (GPI-anchor amidated glycine) is attached at Gly-182. A propeptide spans 183-204 (AADAITAGTGLMGAALAAVMLL) (removed in mature form).

In terms of processing, the GPI-anchor is attached to the protein in the endoplasmic reticulum and serves to target the protein to the cell surface. There, the glucosamine-inositol phospholipid moiety is cleaved off and the GPI-modified mannoprotein is covalently attached via its lipidless GPI glycan remnant to the 1,6-beta-glucan of the outer cell wall layer.

It is found in the secreted. Its subcellular location is the cell wall. It localises to the membrane. Involved in the uptake of non-siderophore and siderophore sources of iron. Has a role in the retention of iron in the cell wall and periplasmic space. This Saccharomyces cerevisiae (strain ATCC 204508 / S288c) (Baker's yeast) protein is Facilitator of iron transport 3 (FIT3).